We begin with the raw amino-acid sequence, 167 residues long: Small ribosomal subunit protein uS5 (167 aa).

One can recognise an S5 DRBM domain in the interval 19-82 (LTEKVLHINR…EAARKNMISC (64 aa)).

Belongs to the universal ribosomal protein uS5 family. As to quaternary structure, part of the 30S ribosomal subunit. Contacts proteins S4 and S8.

With S4 and S12 plays an important role in translational accuracy. Functionally, located at the back of the 30S subunit body where it stabilizes the conformation of the head with respect to the body. The polypeptide is Small ribosomal subunit protein uS5 (Protochlamydia amoebophila (strain UWE25)).